Here is a 393-residue protein sequence, read N- to C-terminus: MSDRVKITPMTLNFGPQHPAAHGVMRLVLEMGGEVIERIDPHIGLLHRGTEKLIEYKTYLQALPYFDRLDYVSPMCQEHAYSLCVEKLLKCEIPIRAKYLRVIFCELTRILNHLLNISSQALDIGAMTPLLWMFEEREKILGFYERASGARFHSAYIRPGGVAADVPDDLIDDIFKFIKTFPKFIDDVDELLTENRIWKQRNVDIGIVSKEQALDWGFSGPMLRACGIPWDLRKSQPYEIYEDLEFEIPIGKKGDCYDRYLVRMAEIRQSIKLLEQCLNRLPNGPIKTDDRKIAPPKRSEMKESMEALIHHFKLYSEGYSVPIGETYMAVEAPKGEFGVYIVSDGTNKPYRCRIRAPGFAHLQAIDMMAKGHMLADLTAIIGSLDIVFGEIDR.

Belongs to the complex I 49 kDa subunit family. NDH-1 is composed of 14 different subunits. Subunits NuoB, C, D, E, F, and G constitute the peripheral sector of the complex.

It localises to the cell inner membrane. The enzyme catalyses a quinone + NADH + 5 H(+)(in) = a quinol + NAD(+) + 4 H(+)(out). NDH-1 shuttles electrons from NADH, via FMN and iron-sulfur (Fe-S) centers, to quinones in the respiratory chain. The immediate electron acceptor for the enzyme in this species is believed to be ubiquinone. Couples the redox reaction to proton translocation (for every two electrons transferred, four hydrogen ions are translocated across the cytoplasmic membrane), and thus conserves the redox energy in a proton gradient. This Ehrlichia chaffeensis (strain ATCC CRL-10679 / Arkansas) protein is NADH-quinone oxidoreductase subunit D.